A 301-amino-acid chain; its full sequence is Ribonuclease Z (301 aa).

Zn(2+) contacts are provided by H61, H63, D65, H66, H140, D211, and H269. D65 serves as the catalytic Proton acceptor.

It belongs to the RNase Z family. In terms of assembly, homodimer. The cofactor is Zn(2+).

The catalysed reaction is Endonucleolytic cleavage of RNA, removing extra 3' nucleotides from tRNA precursor, generating 3' termini of tRNAs. A 3'-hydroxy group is left at the tRNA terminus and a 5'-phosphoryl group is left at the trailer molecule.. Functionally, zinc phosphodiesterase, which displays some tRNA 3'-processing endonuclease activity. Probably involved in tRNA maturation, by removing a 3'-trailer from precursor tRNA. This chain is Ribonuclease Z, found in Bradyrhizobium sp. (strain ORS 278).